A 546-amino-acid polypeptide reads, in one-letter code: Chromosomal replication initiator protein DnaA (546 aa).

A domain I, interacts with DnaA modulators region spans residues 1–85 (MSDPQAALRA…TRALSQHMGR (85 aa)). The interval 85 to 204 (RPCSLAVTIA…EPAHNPNREK (120 aa)) is domain II. Residues 96–111 (PPQPAPQEEPPAPAPQ) are compositionally biased toward pro residues. A disordered region spans residues 96 to 209 (PPQPAPQEEP…PNREKSLNPK (114 aa)). The span at 126 to 145 (QTQAFQQPTQSTQPAPASQP) shows a compositional bias: low complexity. Basic and acidic residues predominate over residues 191–209 (IPREEPAHNPNREKSLNPK). The segment at 205–421 (SLNPKHTFEN…GALIRVSAYS (217 aa)) is domain III, AAA+ region. The ATP site is built by Gly-249, Gly-251, Lys-252, and Thr-253. The interval 422–546 (SLVNEPISLE…TQRVKNHNQR (125 aa)) is domain IV, binds dsDNA.

Belongs to the DnaA family. Oligomerizes as a right-handed, spiral filament on DNA at oriC.

The protein localises to the cytoplasm. Its function is as follows. Plays an essential role in the initiation and regulation of chromosomal replication. ATP-DnaA binds to the origin of replication (oriC) to initiate formation of the DNA replication initiation complex once per cell cycle. Binds the DnaA box (a 9 base pair repeat at the origin) and separates the double-stranded (ds)DNA. Forms a right-handed helical filament on oriC DNA; dsDNA binds to the exterior of the filament while single-stranded (ss)DNA is stabiized in the filament's interior. The ATP-DnaA-oriC complex binds and stabilizes one strand of the AT-rich DNA unwinding element (DUE), permitting loading of DNA polymerase. After initiation quickly degrades to an ADP-DnaA complex that is not apt for DNA replication. Binds acidic phospholipids. The chain is Chromosomal replication initiator protein DnaA from Corynebacterium aurimucosum (strain ATCC 700975 / DSM 44827 / CIP 107346 / CN-1) (Corynebacterium nigricans).